We begin with the raw amino-acid sequence, 359 residues long: 4-hydroxy-3-methylbut-2-en-1-yl diphosphate synthase (flavodoxin) (359 aa).

4 residues coordinate [4Fe-4S] cluster: Cys-264, Cys-267, Cys-299, and Glu-306.

It belongs to the IspG family. [4Fe-4S] cluster serves as cofactor.

The enzyme catalyses (2E)-4-hydroxy-3-methylbut-2-enyl diphosphate + oxidized [flavodoxin] + H2O + 2 H(+) = 2-C-methyl-D-erythritol 2,4-cyclic diphosphate + reduced [flavodoxin]. The protein operates within isoprenoid biosynthesis; isopentenyl diphosphate biosynthesis via DXP pathway; isopentenyl diphosphate from 1-deoxy-D-xylulose 5-phosphate: step 5/6. Functionally, converts 2C-methyl-D-erythritol 2,4-cyclodiphosphate (ME-2,4cPP) into 1-hydroxy-2-methyl-2-(E)-butenyl 4-diphosphate. This chain is 4-hydroxy-3-methylbut-2-en-1-yl diphosphate synthase (flavodoxin), found in Helicobacter pylori (strain J99 / ATCC 700824) (Campylobacter pylori J99).